The following is a 374-amino-acid chain: DNA-directed RNA polymerase subunit alpha (374 aa).

Residues 1–257 are alpha N-terminal domain (alpha-NTD); that stretch reads MSDNAHNLLY…KHFSIFENMD (257 aa). An alpha C-terminal domain (alpha-CTD) region spans residues 274-374; sequence KDDILHKLIL…EKIRAKNIKG (101 aa).

Belongs to the RNA polymerase alpha chain family. As to quaternary structure, homodimer. The RNAP catalytic core consists of 2 alpha, 1 beta, 1 beta' and 1 omega subunit. When a sigma factor is associated with the core the holoenzyme is formed, which can initiate transcription.

It carries out the reaction RNA(n) + a ribonucleoside 5'-triphosphate = RNA(n+1) + diphosphate. In terms of biological role, DNA-dependent RNA polymerase catalyzes the transcription of DNA into RNA using the four ribonucleoside triphosphates as substrates. The sequence is that of DNA-directed RNA polymerase subunit alpha from Chlamydia pneumoniae (Chlamydophila pneumoniae).